The following is a 193-amino-acid chain: DNA damage-inducible transcript 4-like protein (193 aa).

The protein belongs to the DDIT4 family. As to expression, expressed in heart, skeletal muscle and testis.

Its subcellular location is the cytoplasm. Inhibits cell growth by regulating the TOR signaling pathway upstream of the TSC1-TSC2 complex and downstream of AKT1. This Rattus norvegicus (Rat) protein is DNA damage-inducible transcript 4-like protein (Ddit4l).